The chain runs to 122 residues: Large ribosomal subunit protein uL14 (122 aa).

The protein belongs to the universal ribosomal protein uL14 family. In terms of assembly, part of the 50S ribosomal subunit. Forms a cluster with proteins L3 and L19. In the 70S ribosome, L14 and L19 interact and together make contacts with the 16S rRNA in bridges B5 and B8.

Functionally, binds to 23S rRNA. Forms part of two intersubunit bridges in the 70S ribosome. In Bordetella parapertussis (strain 12822 / ATCC BAA-587 / NCTC 13253), this protein is Large ribosomal subunit protein uL14.